The sequence spans 158 residues: Protein BTG2 (158 aa).

Phosphoserine; by MAPK1 and MAPK3 is present on Ser-147. The residue at position 149 (Ser-149) is a Phosphoserine; by MAPK14.

The protein belongs to the BTG family. In terms of assembly, interacts with PRKCABP. Interacts with CNOT7 and CNOT8; indicative for an association with the CCR4-NOT complex. Interacts with PIN1, inducing mitochondrial depolarization. Post-translationally, phosphorylated at Ser-147 by MAPK1/ERK2 and MAPK3/ERK1, and at Ser-149 by MAPK14, leading to PIN1-binding and mitochondrial depolarization. As to expression, in brain at embryonic day 13.5, placenta, amnion, and spleen, which are proliferating and/or differentiating.

Its function is as follows. Anti-proliferative protein; the function is mediated by association with deadenylase subunits of the CCR4-NOT complex. Activates mRNA deadenylation in a CNOT6 and CNOT7-dependent manner. In vitro can inhibit deadenylase activity of CNOT7 and CNOT8. Involved in cell cycle regulation. Could be involved in the growth arrest and differentiation of the neuronal precursors. Modulates transcription regulation mediated by ESR1. Involved in mitochondrial depolarization and neurite outgrowth. In Rattus norvegicus (Rat), this protein is Protein BTG2 (Btg2).